The following is a 908-amino-acid chain: Mycobactin import ATP-binding/permease protein IrtA (908 aa).

Topologically, residues 1–329 are cytoplasmic; that stretch reads MARGFQGVML…SRLLAPLKKP (329 aa). The region spanning 15–124 is the FAD-binding FR-type domain; it reads ARDHQATVVD…MGSRGFSVPE (110 aa). Residues 16–245 form a siderophore interaction domain region; it reads RDHQATVVDK…AQAYWTEGRA (230 aa). FAD-binding positions include 70–73, 87–91, 97–98, and 241–243; these read RAYT, DMVLH, AS, and TEG. The segment at 245–311 is disordered; the sequence is AMGSSRGETS…GAAQPRTPVR (67 aa). A compositionally biased stretch (low complexity) spans 253–309; it reads TSTPAKPAAKTAPAKAAAKPAAASGAGTPEHAAAPAAATTGAPQAAPAPGAAQPRTP. The chain crosses the membrane as a helical span at residues 330 to 350; sequence LIVSGVLQALITLIELAPFVL. The ABC transmembrane type-1 domain maps to 331–613; sequence IVSGVLQALI…IGYGLSGIQT (283 aa). Residues 351–371 lie on the Periplasmic side of the membrane; that stretch reads LVELARLLLGGAEAERLWTLG. Residues 372-392 traverse the membrane as a helical segment; the sequence is LTAVSLIGLGAVLAAAMTLWL. The Cytoplasmic segment spans residues 393–444; sequence HRVDARFAHELRGRLLTKLSRLPLGWFTRRGSASTKQLVQDDTLALHYLITH. The helical transmembrane segment at 445–465 threads the bilayer; the sequence is AIPDAVAAVVAPVAVLVYLFV. The Periplasmic segment spans residues 466–469; that stretch reads ADWR. A helical membrane pass occupies residues 470–490; that stretch reads VALVLFIPVLVYLVLMSVMTI. Residues 491 to 557 are Cytoplasmic-facing; sequence QSGSKIAQAP…PFVGKKTLMD (67 aa). The chain crosses the membrane as a helical span at residues 558-578; the sequence is LVTRPATFLWIILVAGVPLVV. Over 579–586 the chain is Periplasmic; it reads TGRMDPVN. Residues 587–607 form a helical membrane-spanning segment; it reads LLPFLLLGTTFGARLLGIGYG. Residues 608 to 908 lie on the Cytoplasmic side of the membrane; it reads LSGIQTGMLA…VSADAVEVGR (301 aa). One can recognise an ABC transporter domain in the interval 654–887; it reads VELDRVSFEY…GGRYRGLWDS (234 aa). 687 to 694 contacts ATP; that stretch reads GPSGSGKS.

The protein belongs to the ABC transporter superfamily. Siderophore-Fe(3+) uptake transporter (SIUT) (TC 3.A.1.21) family. Forms a heterodimer with IrtB. The cofactor is FAD.

The protein localises to the cell inner membrane. With respect to regulation, the ATPase activity of IrtAB is stimulated more than 38-fold in the presence of Fe-MBT, and more than 10-fold in the presence of Fe-cMBT. Its function is as follows. Part of the ABC transporter complex IrtAB involved in the import of iron-bound mycobactin (Fe-MBT) and carboxymycobactin (Fe-cMBT). Has a preference for Fe-MBT over Fe-cMBT. Mycobactins are then reduced by the siderophore interaction domain to facilitate iron release in the bacterial cell. Transmembrane domains (TMD) form a pore in the membrane and the ATP-binding domain (NBD) is responsible for energy generation. In Mycolicibacterium thermoresistibile (strain ATCC 19527 / DSM 44167 / CIP 105390 / JCM 6362 / NCTC 10409 / 316) (Mycobacterium thermoresistibile), this protein is Mycobactin import ATP-binding/permease protein IrtA.